Consider the following 256-residue polypeptide: Small ribosomal subunit protein uS3 (256 aa).

The 83-residue stretch at 39 to 121 folds into the KH type-2 domain; that stretch reads IRTYLTKQLS…TIRINVVEVT (83 aa). Residues 227–256 are disordered; the sequence is RHEQKFPLQQPKRRQQRRRPTFEDRSAQEA. The segment covering 246–256 has biased composition (basic and acidic residues); it reads PTFEDRSAQEA.

This sequence belongs to the universal ribosomal protein uS3 family. As to quaternary structure, part of the 30S ribosomal subunit. Forms a tight complex with proteins S10 and S14.

In terms of biological role, binds the lower part of the 30S subunit head. Binds mRNA in the 70S ribosome, positioning it for translation. This Synechococcus sp. (strain JA-2-3B'a(2-13)) (Cyanobacteria bacterium Yellowstone B-Prime) protein is Small ribosomal subunit protein uS3.